A 396-amino-acid polypeptide reads, in one-letter code: MAALDTFLFTSESVNEGHPDKLCDQVSDAVLDACLAEDPDSKVACETCTKTNMVMVFGEITTKANVDYEKIVRETCRNIGFVSADVGLDADHCKVLVNIEQQSPDIAQGVHGHFTKRPEEIGAGDQGHMFGYATDETPELMPLSHVLATKLGARLTEVRKNGTCAWLRPDGKTQVTVEYRNESGARVPVRVHTVLISTQHDETVTNDEIAADLKEHVIKPVIPEQYLDEKTIFHLNPSGRFVIGGPHGDAGLTGRKIIIDTYGGWGAHGGGAFSGKDPTKVDRSGAYVARQAAKSIVASGLARRCIVQVSYAIGVPEPLSVFVDTYGTGRIPDKEILKIVKENFDFRPGMIIINLDLKKGGNGRYLKTAAYGHFGRDDPDFTWEVVKPLKWEKPSA.

Position 12 (glutamate 12) interacts with Mg(2+). Histidine 18 is an ATP binding site. A K(+)-binding site is contributed by glutamate 46. Glutamate 59 and glutamine 102 together coordinate L-methionine. Residues 170-172 (DGK), 238-241 (SGRF), aspartate 249, 255-256 (RK), alanine 272, lysine 276, and lysine 280 each bind ATP. Residue aspartate 249 coordinates L-methionine. An L-methionine-binding site is contributed by lysine 280.

Belongs to the AdoMet synthase family. As to quaternary structure, homotetramer. It depends on Mn(2+) as a cofactor. Mg(2+) is required as a cofactor. Co(2+) serves as cofactor. The cofactor is K(+).

The protein localises to the cytoplasm. It catalyses the reaction L-methionine + ATP + H2O = S-adenosyl-L-methionine + phosphate + diphosphate. It functions in the pathway amino-acid biosynthesis; S-adenosyl-L-methionine biosynthesis; S-adenosyl-L-methionine from L-methionine: step 1/1. Functionally, catalyzes the formation of S-adenosylmethionine from methionine and ATP. The reaction comprises two steps that are both catalyzed by the same enzyme: formation of S-adenosylmethionine (AdoMet) and triphosphate, and subsequent hydrolysis of the triphosphate. In Oryza sativa subsp. japonica (Rice), this protein is S-adenosylmethionine synthase 1 (SAM1).